The sequence spans 210 residues: MEIPVYNASGEIIKNISISEDVFGVPFNEALVHQAFVAQQANARQGTQSTKTRGEVQGSSRKIYRQKGTGNARMGTNRSPVRRHGGVAFGPRPRDFSKDLPKKMRRQAIRCVLSFKLESGELKVVDQLSFDEPKTRDMAKILAALQVMSPTLIAVDNPDTNFIKSARNIPAVKTTPANLLNISDMLRNKQLVMTEEAVRQVEELWGQRSR.

Residues 41–51 (ANARQGTQSTK) show a composition bias toward polar residues. 2 disordered regions span residues 41–60 (ANARQGTQSTKTRGEVQGSS) and 67–98 (KGTGNARMGTNRSPVRRHGGVAFGPRPRDFSK).

The protein belongs to the universal ribosomal protein uL4 family. In terms of assembly, part of the 50S ribosomal subunit.

One of the primary rRNA binding proteins, this protein initially binds near the 5'-end of the 23S rRNA. It is important during the early stages of 50S assembly. It makes multiple contacts with different domains of the 23S rRNA in the assembled 50S subunit and ribosome. Its function is as follows. Forms part of the polypeptide exit tunnel. This is Large ribosomal subunit protein uL4 from Dehalococcoides mccartyi (strain ATCC BAA-2266 / KCTC 15142 / 195) (Dehalococcoides ethenogenes (strain 195)).